The chain runs to 299 residues: Quinolinate synthase (299 aa).

Iminosuccinate is bound by residues His-21 and Ser-38. Cys-83 is a [4Fe-4S] cluster binding site. Iminosuccinate contacts are provided by residues 109 to 111 (YVN) and Ser-126. A [4Fe-4S] cluster-binding site is contributed by Cys-170. Iminosuccinate-binding positions include 196-198 (HPE) and Thr-213. Cys-256 contributes to the [4Fe-4S] cluster binding site.

The protein belongs to the quinolinate synthase family. Type 2 subfamily. [4Fe-4S] cluster serves as cofactor.

The protein localises to the cytoplasm. The catalysed reaction is iminosuccinate + dihydroxyacetone phosphate = quinolinate + phosphate + 2 H2O + H(+). It functions in the pathway cofactor biosynthesis; NAD(+) biosynthesis; quinolinate from iminoaspartate: step 1/1. Catalyzes the condensation of iminoaspartate with dihydroxyacetone phosphate to form quinolinate. The polypeptide is Quinolinate synthase (Pyrococcus abyssi (strain GE5 / Orsay)).